A 190-amino-acid polypeptide reads, in one-letter code: Transcription antitermination protein NusB (190 aa).

The interval 135-190 (APAPESVAEEADEESSDSAAAASEPTDEGDVSDSPDSSGASDEPAAPSAEIQPTVD) is disordered. A compositionally biased stretch (acidic residues) spans 141 to 150 (VAEEADEESS).

The protein belongs to the NusB family.

Involved in transcription antitermination. Required for transcription of ribosomal RNA (rRNA) genes. Binds specifically to the boxA antiterminator sequence of the ribosomal RNA (rrn) operons. This chain is Transcription antitermination protein NusB, found in Bifidobacterium longum (strain DJO10A).